The primary structure comprises 473 residues: Ribulose bisphosphate carboxylase large chain (473 aa).

Positions 116 and 166 each coordinate substrate. Lys-168 serves as the catalytic Proton acceptor. Lys-170 provides a ligand contact to substrate. Residues Lys-194, Asp-196, and Glu-197 each coordinate Mg(2+). Position 194 is an N6-carboxylysine (Lys-194). His-287 functions as the Proton acceptor in the catalytic mechanism. Arg-288, His-320, and Ser-372 together coordinate substrate.

The protein belongs to the RuBisCO large chain family. Type I subfamily. Heterohexadecamer of 8 large chains and 8 small chains. It depends on Mg(2+) as a cofactor.

The catalysed reaction is 2 (2R)-3-phosphoglycerate + 2 H(+) = D-ribulose 1,5-bisphosphate + CO2 + H2O. It catalyses the reaction D-ribulose 1,5-bisphosphate + O2 = 2-phosphoglycolate + (2R)-3-phosphoglycerate + 2 H(+). RuBisCO catalyzes two reactions: the carboxylation of D-ribulose 1,5-bisphosphate, the primary event in carbon dioxide fixation, as well as the oxidative fragmentation of the pentose substrate. Both reactions occur simultaneously and in competition at the same active site. The sequence is that of Ribulose bisphosphate carboxylase large chain from Halorhodospira halophila (strain DSM 244 / SL1) (Ectothiorhodospira halophila (strain DSM 244 / SL1)).